Reading from the N-terminus, the 510-residue chain is Dermokine (510 aa).

Residues 1-21 (MKLKGSLACLLLFLLLGSGEA) form the signal peptide. The disordered stretch occupies residues 117 to 362 (VDPAHKSWQG…SSGEGEAVSG (246 aa)). Over residues 124-137 (WQGTPGSNGAWGTN) the composition is skewed to polar residues. The span at 141–158 (PSGGHGIPGSQGSSGGPG) shows a compositional bias: gly residues. Residues 194-221 (GANSQGTSPQPGSVRSNNNRNTECTTPP) show a composition bias toward polar residues. Composition is skewed to gly residues over residues 222-231 (GSGGSSGNSG), 240-254 (TNGGGSSGGSNGGSN), and 264-292 (SNGGGSSNSGGSNGGGSNGGGSSNGGGSN). Composition is skewed to low complexity over residues 293-303 (AGSSGSSGSSS) and 319-332 (PSPSSGSRVGSGVR). Residues 344-355 (GGSGGQGQGSSG) show a composition bias toward gly residues.

The protein belongs to the dermokine family. As to quaternary structure, homooligomer. Seems to be able to homodimerize and homotrimerize. O-glycosylated.

It is found in the secreted. Functionally, may act as a soluble regulator of keratinocyte differentiation. This Bos taurus (Bovine) protein is Dermokine (DMKN).